The chain runs to 294 residues: ATP synthase gamma chain (294 aa).

Belongs to the ATPase gamma chain family. In terms of assembly, F-type ATPases have 2 components, CF(1) - the catalytic core - and CF(0) - the membrane proton channel. CF(1) has five subunits: alpha(3), beta(3), gamma(1), delta(1), epsilon(1). CF(0) has three main subunits: a, b and c.

It localises to the cell inner membrane. In terms of biological role, produces ATP from ADP in the presence of a proton gradient across the membrane. The gamma chain is believed to be important in regulating ATPase activity and the flow of protons through the CF(0) complex. This Nitratiruptor sp. (strain SB155-2) protein is ATP synthase gamma chain.